The following is a 330-amino-acid chain: RNA polymerase sigma factor RpoS (330 aa).

The sigma-70 factor domain-1 stretch occupies residues 56–89; it reads DATQLYLGEIGYSPLLTAEEEVYFARRALRGDVA. The sigma-70 factor domain-2 stretch occupies residues 94-164; sequence MIESNLRLVV…ERAIMNQTRT (71 aa). The Interaction with polymerase core subunit RpoC signature appears at 118–121; sequence DLIE. The segment at 174–249 is sigma-70 factor domain-3; that stretch reads ELNVYLRTAR…DEKENGPEDT (76 aa). The sigma-70 factor domain-4 stretch occupies residues 262 to 315; it reads WLFELNAKQREVLARRFGLLGYEAATLEDVGREIGLTRERVRQIQVEGLRRLRE. Residues 288 to 307 constitute a DNA-binding region (H-T-H motif); sequence LEDVGREIGLTRERVRQIQV.

It belongs to the sigma-70 factor family. RpoS subfamily. As to quaternary structure, interacts with the RNA polymerase core enzyme and RssB.

It is found in the cytoplasm. Sigma factors are initiation factors that promote the attachment of RNA polymerase to specific initiation sites and are then released. This sigma factor is the master transcriptional regulator of the stationary phase and the general stress response. Controls, positively or negatively, the expression of several hundred genes, which are mainly involved in metabolism, transport, regulation and stress management. Its function is as follows. Protects stationary phase cells from killing induced by endoribonuclease MazF. In Escherichia coli (strain K12), this protein is RNA polymerase sigma factor RpoS.